The sequence spans 62 residues: Small polypeptide DEVIL 17 (62 aa).

Residues 27 to 58 (RRNKGCLAMVKERRSRFYIARRCILMLLCWHK) form a required for DVL/RTFL small polypeptide activity region. A helical membrane pass occupies residues 39 to 56 (RRSRFYIARRCILMLLCW).

This sequence belongs to the DVL/RTFL small polypeptides family.

The protein resides in the cell membrane. Functionally, small polypeptide acting as a regulatory molecule which coordinates cellular responses required for differentiation, growth and development, probably by restricting polar cell proliferation in lateral organs and coordinating socket cell recruitment and differentiation at trichome sites. The sequence is that of Small polypeptide DEVIL 17 from Arabidopsis thaliana (Mouse-ear cress).